A 593-amino-acid chain; its full sequence is Aspartate--tRNA ligase (593 aa).

An L-aspartate-binding site is contributed by E180. An aspartate region spans residues 204 to 207 (QIFK). R226 provides a ligand contact to L-aspartate. Residues 226-228 (RDE) and Q235 each bind ATP. H453 is a binding site for L-aspartate. E487 lines the ATP pocket. R494 provides a ligand contact to L-aspartate. An ATP-binding site is contributed by 539–542 (GLDR).

This sequence belongs to the class-II aminoacyl-tRNA synthetase family. Type 1 subfamily. As to quaternary structure, homodimer.

The protein resides in the cytoplasm. The catalysed reaction is tRNA(Asp) + L-aspartate + ATP = L-aspartyl-tRNA(Asp) + AMP + diphosphate. Catalyzes the attachment of L-aspartate to tRNA(Asp) in a two-step reaction: L-aspartate is first activated by ATP to form Asp-AMP and then transferred to the acceptor end of tRNA(Asp). The sequence is that of Aspartate--tRNA ligase from Clostridium botulinum (strain Kyoto / Type A2).